The primary structure comprises 205 residues: Octanoyltransferase (205 aa).

Residues 30 to 205 (NLSDELVWLL…ILKQEFHKIF (176 aa)) form the BPL/LPL catalytic domain. Substrate contacts are provided by residues 68–75 (RGGKYTYH), 140–142 (AFG), and 153–155 (GIA). Cys-171 serves as the catalytic Acyl-thioester intermediate.

The protein belongs to the LipB family.

It localises to the cytoplasm. It catalyses the reaction octanoyl-[ACP] + L-lysyl-[protein] = N(6)-octanoyl-L-lysyl-[protein] + holo-[ACP] + H(+). It participates in protein modification; protein lipoylation via endogenous pathway; protein N(6)-(lipoyl)lysine from octanoyl-[acyl-carrier-protein]: step 1/2. In terms of biological role, catalyzes the transfer of endogenously produced octanoic acid from octanoyl-acyl-carrier-protein onto the lipoyl domains of lipoate-dependent enzymes. Lipoyl-ACP can also act as a substrate although octanoyl-ACP is likely to be the physiological substrate. The protein is Octanoyltransferase of Wolbachia pipientis subsp. Culex pipiens (strain wPip).